A 406-amino-acid polypeptide reads, in one-letter code: 4-hydroxy-3-methylbut-2-en-1-yl diphosphate synthase (ferredoxin) (406 aa).

The [4Fe-4S] cluster site is built by Cys-315, Cys-318, Cys-349, and Glu-356.

Belongs to the IspG family. [4Fe-4S] cluster is required as a cofactor.

It carries out the reaction (2E)-4-hydroxy-3-methylbut-2-enyl diphosphate + 2 oxidized [2Fe-2S]-[ferredoxin] + H2O = 2-C-methyl-D-erythritol 2,4-cyclic diphosphate + 2 reduced [2Fe-2S]-[ferredoxin] + H(+). It functions in the pathway isoprenoid biosynthesis; isopentenyl diphosphate biosynthesis via DXP pathway; isopentenyl diphosphate from 1-deoxy-D-xylulose 5-phosphate: step 5/6. Converts 2C-methyl-D-erythritol 2,4-cyclodiphosphate (ME-2,4cPP) into 1-hydroxy-2-methyl-2-(E)-butenyl 4-diphosphate. In Microcystis aeruginosa (strain NIES-843 / IAM M-2473), this protein is 4-hydroxy-3-methylbut-2-en-1-yl diphosphate synthase (ferredoxin).